The primary structure comprises 170 residues: Lipoprotein signal peptidase (170 aa).

3 helical membrane passes run 5–25, 70–90, and 98–118; these read VYHQYWFWYLAAFVVFLLDQG, WFFTIVAVAASVLLIVWICRV, and AFALSFILGGAVGNLYDRIIH. Residues Asp123 and Asp141 contribute to the active site. Residues 137 to 157 traverse the membrane as a helical segment; the sequence is FNLADAAISLGAMVLIADLFI.

It belongs to the peptidase A8 family.

The protein resides in the cell inner membrane. The enzyme catalyses Release of signal peptides from bacterial membrane prolipoproteins. Hydrolyzes -Xaa-Yaa-Zaa-|-(S,diacylglyceryl)Cys-, in which Xaa is hydrophobic (preferably Leu), and Yaa (Ala or Ser) and Zaa (Gly or Ala) have small, neutral side chains.. Its pathway is protein modification; lipoprotein biosynthesis (signal peptide cleavage). This protein specifically catalyzes the removal of signal peptides from prolipoproteins. The polypeptide is Lipoprotein signal peptidase (Cellvibrio japonicus (strain Ueda107) (Pseudomonas fluorescens subsp. cellulosa)).